The following is a 440-amino-acid chain: FAD-dependent monooxygenase FVEG_08293 (440 aa).

Residues 7–26 (EFNVAIVGAGVAGLALAMAL) form a helical membrane-spanning segment. Positions 37 and 50 each coordinate FAD. An N-linked (GlcNAc...) asparagine glycan is attached at N77. R122 is a binding site for FAD. Residues R203 and Y235 contribute to the active site. Positions 317 and 330 each coordinate FAD.

It belongs to the paxM FAD-dependent monooxygenase family. The cofactor is FAD.

Its subcellular location is the membrane. In terms of biological role, FAD-dependent monooxygenase; part of the Fusarium detoxification of benzoxazolinone cluster 1 (FDB1) involved in the degradation of benzoxazolinones produced by the host plant. Maize, wheat, and rye produce the 2 benzoxazinone phytoanticipins 2,4-dihy-droxy-7-methoxy-1,4-benzoxazin-3-one (DIMBOA) and 2,4-dihydroxy-1,4-benzoxazin-3-one (DIBOA) that, due to their inherent instability once released, spontaneously degrade to the more stable corresponding benzoxazolinones, 6-methoxy-2-benzoxazolinone (MBOA) and 2-benzoxazolinone (BOA), respectively. The first step in the detoxification of benzoxazolinones involves the hydrolysis of the cyclic ester bond of benzoxazolinones by the FDB1 cluster gamma-lactamase MBL1 to aminophenols. MBL1 is able to convert BOA into 2-aminophenol (2-AP), as well as MBOA into 5-methoxy-2-aminophenol (2-AMP). The FDB2 cluster N-malonyltransferase FDB2/NAT1 then metabolizes aminophenols via N-malonylation to non-toxic malonamic acids. FDB2/NAT1 converts 2-AP into N-(2-hydroxyphenyl) malonamic acid (HPMA) and 2-AMP into N-(2-hydroxy-4-methoxyphenyl) malonamic acid (HMPMA). The duplicated dienlactone hydrolases DLH1 and DLH2 may provide redundant function for hydrolyzing the lactone moiety in the BOA molecule. The roles of the amidases an other enzymes encoded by the 2 FDB clusters have not been identified so far. This is FAD-dependent monooxygenase FVEG_08293 from Gibberella moniliformis (strain M3125 / FGSC 7600) (Maize ear and stalk rot fungus).